We begin with the raw amino-acid sequence, 394 residues long: Glycerol-1-phosphate dehydrogenase [NAD(P)+] (394 aa).

NAD(+) is bound by residues D54, 116–120, and 138–141; these read GTIHD and TAPS. Position 143 (D143) interacts with substrate. Position 147 (S147) interacts with NAD(+). Position 190 (D190) interacts with substrate. Positions 190 and 270 each coordinate Ni(2+). H274 is a binding site for substrate. H290 contacts Ni(2+).

This sequence belongs to the glycerol-1-phosphate dehydrogenase family. Homodimer. Requires Ni(2+) as cofactor.

It localises to the cytoplasm. It carries out the reaction sn-glycerol 1-phosphate + NAD(+) = dihydroxyacetone phosphate + NADH + H(+). It catalyses the reaction sn-glycerol 1-phosphate + NADP(+) = dihydroxyacetone phosphate + NADPH + H(+). Catalyzes the NAD(P)H-dependent reduction of dihydroxyacetonephosphate (DHAP or glycerone phosphate) to glycerol 1-phosphate (G1P). The G1P thus generated is probably used for the synthesis of phosphoglycerolipids in Gram-positive bacterial species. The chain is Glycerol-1-phosphate dehydrogenase [NAD(P)+] from Bacillus velezensis (strain DSM 23117 / BGSC 10A6 / LMG 26770 / FZB42) (Bacillus amyloliquefaciens subsp. plantarum).